We begin with the raw amino-acid sequence, 323 residues long: Melanocortin receptor 3 (323 aa).

At 1–37 the chain is on the extracellular side; that stretch reads MNASCCLPSVQPTLPNGSEHLQAPFFSNQSSSAFCEQ. N-linked (GlcNAc...) asparagine glycans are attached at residues Asn-2, Asn-16, and Asn-28. A helical transmembrane segment spans residues 38–63; that stretch reads VFIKPEVFLSLGIVSLLENILVILAV. Topologically, residues 64 to 75 are cytoplasmic; the sequence is VRNGNLHSPMYF. Residues 76–100 traverse the membrane as a helical segment; sequence FLCSLAVADMLVSVSNALETIMIAI. Over 101-118 the chain is Extracellular; that stretch reads VHSDYLTFEDQFIQHMDN. The helical transmembrane segment at 119 to 140 threads the bilayer; the sequence is IFDSMICISLVASICNLLAIAV. The Cytoplasmic portion of the chain corresponds to 141–160; the sequence is DRYVTIFYALRYHSIMTVRK. The helical transmembrane segment at 161–181 threads the bilayer; it reads ALTLIVAIWVCCGVCGVVFIV. The Extracellular portion of the chain corresponds to 182-186; sequence YSESK. A helical transmembrane segment spans residues 187 to 210; sequence MVIVCLITMFFAMMLLMGTLYVHM. Residues 211 to 245 lie on the Cytoplasmic side of the membrane; that stretch reads FLFARLHVKRIAALPPADGVAPQQHSCMKGAVTIT. Residues 246 to 268 traverse the membrane as a helical segment; the sequence is ILLGVFIFCWAPFFLHLVLIITC. Residues 269-277 are Extracellular-facing; sequence PTNPYCICY. A helical membrane pass occupies residues 278–301; sequence TAHFNTYLVLIMCNSVIDPLIYAF. Over 302–323 the chain is Cytoplasmic; sequence RSLELRNTFREILCGCNGMNLG. Cys-315 is lipidated: S-palmitoyl cysteine.

This sequence belongs to the G-protein coupled receptor 1 family. As to expression, brain, placental, and gut tissues.

Its subcellular location is the cell membrane. Its function is as follows. Receptor for MSH (alpha, beta and gamma) and ACTH. This receptor is mediated by G proteins which activate adenylate cyclase. Required for expression of anticipatory patterns of activity and wakefulness during periods of limited nutrient availability and for the normal regulation of circadian clock activity in the brain. The polypeptide is Melanocortin receptor 3 (MC3R) (Homo sapiens (Human)).